The following is a 299-amino-acid chain: Ribosomal protein L11 methyltransferase (299 aa).

S-adenosyl-L-methionine-binding residues include Thr149, Gly170, Asp192, and Asn234.

The protein belongs to the methyltransferase superfamily. PrmA family.

It is found in the cytoplasm. It catalyses the reaction L-lysyl-[protein] + 3 S-adenosyl-L-methionine = N(6),N(6),N(6)-trimethyl-L-lysyl-[protein] + 3 S-adenosyl-L-homocysteine + 3 H(+). In terms of biological role, methylates ribosomal protein L11. The protein is Ribosomal protein L11 methyltransferase of Chromohalobacter salexigens (strain ATCC BAA-138 / DSM 3043 / CIP 106854 / NCIMB 13768 / 1H11).